The following is a 378-amino-acid chain: MIHFSINKNLFLQALNITKRAISSKNAIPILSTVKIDVTNEGVTLIGSNGQISIENFISQKNEDAGLLITSLGSILLEASFFINVVSSLPDVTLDFKEIEQNQIVLTSGKSEITLKGKDSEQYPRIQEISASTPLILETKLLKKIINETAFAASTQESRPILTGVHFVLSQHKELKTVATDSHRLSQKKLTLEKNSDDFDVVIPSRSLREFSAVFTDDIETVEIFFANNQILFRSENISFYTRLLEGNYPDTDRLIPTDFNTTITFNVVNLRQSMERARLLSSATQNGTVKLEIKDGVVSAHVHSPEVGKVNEEIDTDQVTGEDLTISFNPTYLIDSLKALNSEKVTISFISAVRPFTLVPADTDEDFMQLITPVRTN.

The protein belongs to the beta sliding clamp family. Forms a ring-shaped head-to-tail homodimer around DNA which binds and tethers DNA polymerases and other proteins to the DNA. The DNA replisome complex has a single clamp-loading complex (3 tau and 1 each of delta, delta', psi and chi subunits) which binds 3 Pol III cores (1 core on the leading strand and 2 on the lagging strand) each with a beta sliding clamp dimer. Additional proteins in the replisome are other copies of gamma, psi and chi, Ssb, DNA helicase and RNA primase.

The protein localises to the cytoplasm. Its function is as follows. Confers DNA tethering and processivity to DNA polymerases and other proteins. Acts as a clamp, forming a ring around DNA (a reaction catalyzed by the clamp-loading complex) which diffuses in an ATP-independent manner freely and bidirectionally along dsDNA. Initially characterized for its ability to contact the catalytic subunit of DNA polymerase III (Pol III), a complex, multichain enzyme responsible for most of the replicative synthesis in bacteria; Pol III exhibits 3'-5' exonuclease proofreading activity. The beta chain is required for initiation of replication as well as for processivity of DNA replication. This is Beta sliding clamp (dnaN) from Streptococcus pneumoniae (strain ATCC BAA-255 / R6).